We begin with the raw amino-acid sequence, 223 residues long: DNA mismatch repair protein MutH (223 aa).

The protein belongs to the MutH family.

It is found in the cytoplasm. In terms of biological role, sequence-specific endonuclease that cleaves unmethylated GATC sequences. It is involved in DNA mismatch repair. The polypeptide is DNA mismatch repair protein MutH (Shewanella baltica (strain OS223)).